A 106-amino-acid chain; its full sequence is Putative membrane protein insertion efficiency factor (106 aa).

This sequence belongs to the UPF0161 family.

It localises to the cell inner membrane. In terms of biological role, could be involved in insertion of integral membrane proteins into the membrane. This is Putative membrane protein insertion efficiency factor from Acinetobacter baylyi (strain ATCC 33305 / BD413 / ADP1).